Here is a 382-residue protein sequence, read N- to C-terminus: 8-amino-7-oxononanoate synthase (382 aa).

A substrate-binding site is contributed by Arg26. Residue 104–105 coordinates pyridoxal 5'-phosphate; that stretch reads GY. A substrate-binding site is contributed by His129. Pyridoxal 5'-phosphate contacts are provided by residues Ser175, 200–203, and 232–235; these read DEAH and TLSK. Lys235 is subject to N6-(pyridoxal phosphate)lysine. Substrate is bound at residue Thr345.

The protein belongs to the class-II pyridoxal-phosphate-dependent aminotransferase family. BioF subfamily. As to quaternary structure, homodimer. It depends on pyridoxal 5'-phosphate as a cofactor.

It carries out the reaction 6-carboxyhexanoyl-[ACP] + L-alanine + H(+) = (8S)-8-amino-7-oxononanoate + holo-[ACP] + CO2. Its pathway is cofactor biosynthesis; biotin biosynthesis. Its function is as follows. Catalyzes the decarboxylative condensation of pimeloyl-[acyl-carrier protein] and L-alanine to produce 8-amino-7-oxononanoate (AON), [acyl-carrier protein], and carbon dioxide. This is 8-amino-7-oxononanoate synthase (bioF) from Mycolicibacterium smegmatis (strain ATCC 700084 / mc(2)155) (Mycobacterium smegmatis).